A 241-amino-acid polypeptide reads, in one-letter code: Urease accessory protein UreF (241 aa).

Belongs to the UreF family. UreD, UreF and UreG form a complex that acts as a GTP-hydrolysis-dependent molecular chaperone, activating the urease apoprotein by helping to assemble the nickel containing metallocenter of UreC. The UreE protein probably delivers the nickel.

It localises to the cytoplasm. In terms of biological role, required for maturation of urease via the functional incorporation of the urease nickel metallocenter. The sequence is that of Urease accessory protein UreF from Rhodopseudomonas palustris (strain BisB18).